A 141-amino-acid chain; its full sequence is Endoribonuclease YbeY (141 aa).

Residues His-101, His-105, and His-111 each contribute to the Zn(2+) site.

The protein belongs to the endoribonuclease YbeY family. Zn(2+) serves as cofactor.

The protein resides in the cytoplasm. Single strand-specific metallo-endoribonuclease involved in late-stage 70S ribosome quality control and in maturation of the 3' terminus of the 16S rRNA. The protein is Endoribonuclease YbeY of Nitrosomonas eutropha (strain DSM 101675 / C91 / Nm57).